A 298-amino-acid chain; its full sequence is Nucleotide-binding protein Csal_2229 (298 aa).

Position 8–15 (8–15 (GRSGSGKS)) interacts with ATP. 59–62 (DARN) serves as a coordination point for GTP.

The protein belongs to the RapZ-like family.

Functionally, displays ATPase and GTPase activities. The protein is Nucleotide-binding protein Csal_2229 of Chromohalobacter salexigens (strain ATCC BAA-138 / DSM 3043 / CIP 106854 / NCIMB 13768 / 1H11).